The sequence spans 251 residues: Pyruvate formate-lyase-activating enzyme (251 aa).

The region spanning 15–244 (VDGPGLRYIL…KEAYRYVNFN (230 aa)) is the Radical SAM core domain. Cys-29, Cys-33, and Cys-36 together coordinate [4Fe-4S] cluster. S-adenosyl-L-methionine-binding positions include 35–37 (YCH), Gly-79, 134–136 (DIK), and His-207.

The protein belongs to the organic radical-activating enzymes family. [4Fe-4S] cluster is required as a cofactor.

It is found in the cytoplasm. It catalyses the reaction glycyl-[formate C-acetyltransferase] + reduced [flavodoxin] + S-adenosyl-L-methionine = glycin-2-yl radical-[formate C-acetyltransferase] + semiquinone [flavodoxin] + 5'-deoxyadenosine + L-methionine + H(+). In terms of biological role, activation of pyruvate formate-lyase under anaerobic conditions by generation of an organic free radical, using S-adenosylmethionine and reduced flavodoxin as cosubstrates to produce 5'-deoxy-adenosine. The protein is Pyruvate formate-lyase-activating enzyme (pflA) of Staphylococcus epidermidis (strain ATCC 12228 / FDA PCI 1200).